We begin with the raw amino-acid sequence, 778 residues long: MKTSQFLSLLLLAGIAQAIVPPREPRPPTGGGNKLLTYKECVPRATISPRSTSLAWINSDEDGQYISQSDDGALILQNIVTNTNKTLVAADKVPKGYYDYWFKPDLSAVLWATNYTKQYRHSYFANYFILDIEKGSLTPLSQDQAGDIQYAQWSPMDNSIAYVRGNDLYIWNNGKTKRITENGGPDIFNGVPDWVYEEEIFGDRFALWFSPDGEYLAYLRFNETGVPTYTIPYYKNKQKIAPAYPRELEIRYPKVSAKNPTVQFHLLNIASSQETTIPVTAFPENDLVIGEVAWLSSGHDSVAYRAFNRVQDREKIVSVKVESKESKVIRERDGTDGWIDNLLSMSYIGDVNGKEYYVDISDASGWAHIYLYPVDGGKEIALTTGEWEVVAILKVDTKKKLIYFTSTKYHSTTRHVYSVSYDTKVMTPLVNDKEAAYYTASFSAKGGYYILSYQGPNVPYQELYSTKDSKKPLKTITSNDALLEKLKEYKLPKVSFFEIKLPSGETLNVKQRLPPNFNPHKKYPVLFTPYGGPGAQEVSQAWNSLDFKSYITSDPELEYVTWTVDNRGTGYKGRKFRSAVAKRLGFLEPQDQVFAAKELLKNRWADKDHIGIWGWSYGGFLTAKTLETDSGVFTFGISTAPVSDFRLYDSMYTERYMKTVELNADGYSETAVHKVDGFKNLKGHYLIQHGTGDDNVHFQNAAVLSNTLMNGGVTADKLTTQWFTDSDHGIRYDMDSTYQYKQLAKMVYDQKQRKPERPPMHQWSKRVLAALFGERAEE.

The N-terminal stretch at 1–18 (MKTSQFLSLLLLAGIAQA) is a signal peptide. 3 N-linked (GlcNAc...) asparagine glycosylation sites follow: asparagine 84, asparagine 114, and asparagine 222. Active-site charge relay system residues include serine 616, aspartate 693, and histidine 728.

This sequence belongs to the peptidase S9B family.

It localises to the secreted. The enzyme catalyses Release of an N-terminal dipeptide, Xaa-Yaa-|-Zaa-, from a polypeptide, preferentially when Yaa is Pro, provided Zaa is neither Pro nor hydroxyproline.. Extracellular dipeptidyl-peptidase which removes N-terminal dipeptides sequentially from polypeptides having unsubstituted N-termini provided that the penultimate residue is proline. Contributes to pathogenicity. In Arthroderma benhamiae (strain ATCC MYA-4681 / CBS 112371) (Trichophyton mentagrophytes), this protein is Probable dipeptidyl peptidase 4 (DPP4).